We begin with the raw amino-acid sequence, 118 residues long: Co-chaperonin GroES (118 aa).

This sequence belongs to the GroES chaperonin family. In terms of assembly, heptamer of 7 subunits arranged in a ring. Interacts with the chaperonin GroEL.

Its subcellular location is the cytoplasm. Functionally, together with the chaperonin GroEL, plays an essential role in assisting protein folding. The GroEL-GroES system forms a nano-cage that allows encapsulation of the non-native substrate proteins and provides a physical environment optimized to promote and accelerate protein folding. GroES binds to the apical surface of the GroEL ring, thereby capping the opening of the GroEL channel. The protein is Co-chaperonin GroES of Helicobacter pylori (strain P12).